The chain runs to 292 residues: ATP synthase gamma chain (292 aa).

The protein belongs to the ATPase gamma chain family. In terms of assembly, F-type ATPases have 2 components, CF(1) - the catalytic core - and CF(0) - the membrane proton channel. CF(1) has five subunits: alpha(3), beta(3), gamma(1), delta(1), epsilon(1). CF(0) has three main subunits: a, b and c.

The protein resides in the cell inner membrane. Functionally, produces ATP from ADP in the presence of a proton gradient across the membrane. The gamma chain is believed to be important in regulating ATPase activity and the flow of protons through the CF(0) complex. The protein is ATP synthase gamma chain of Magnetococcus marinus (strain ATCC BAA-1437 / JCM 17883 / MC-1).